We begin with the raw amino-acid sequence, 292 residues long: Very long chain fatty acid elongase 2 (292 aa).

Helical transmembrane passes span 29-49, 67-87, 115-135, 153-173, 175-195, 205-225, and 230-250; these read WFLL…LLSI, ILTL…VELI, VLWW…FFVL, MFNI…FFGP, LNSF…FPSM, LTQA…SAVV, and FPFG…ILFL. Residues 289–292 carry the Di-lysine motif motif; the sequence is KKAQ.

It belongs to the ELO family. ELOVL2 subfamily. In terms of assembly, interacts with TECR. Highly expressed in testis, lower level in liver. Weakly expressed in white adipose tissue, brain and kidney.

It localises to the endoplasmic reticulum membrane. It carries out the reaction a very-long-chain acyl-CoA + malonyl-CoA + H(+) = a very-long-chain 3-oxoacyl-CoA + CO2 + CoA. It catalyses the reaction (5Z,8Z,11Z,14Z)-eicosatetraenoyl-CoA + malonyl-CoA + H(+) = (7Z,10Z,13Z,16Z)-3-oxodocosatetraenoyl-CoA + CO2 + CoA. The catalysed reaction is (7Z,10Z,13Z,16Z)-docosatetraenoyl-CoA + malonyl-CoA + H(+) = (9Z,12Z,15Z,18Z)-3-oxotetracosatetraenoyl-CoA + CO2 + CoA. The enzyme catalyses (5Z,8Z,11Z,14Z,17Z)-eicosapentaenoyl-CoA + malonyl-CoA + H(+) = 3-oxo-(7Z,10Z,13Z,16Z,19Z)-docosapentaenoyl-CoA + CO2 + CoA. It carries out the reaction (7Z,10Z,13Z,16Z,19Z)-docosapentaenoyl-CoA + malonyl-CoA + H(+) = (9Z,12Z,15Z,18Z,21Z)-3-oxotetracosapentaenoyl-CoA + CO2 + CoA. Its pathway is lipid metabolism; polyunsaturated fatty acid biosynthesis. Functionally, catalyzes the first and rate-limiting reaction of the four reactions that constitute the long-chain fatty acids elongation cycle. This endoplasmic reticulum-bound enzymatic process allows the addition of 2 carbons to the chain of long- and very long-chain fatty acids (VLCFAs) per cycle. Condensing enzyme that catalyzes the synthesis of polyunsaturated very long chain fatty acid (C20- and C22-PUFA), acting specifically toward polyunsaturated acyl-CoA with the higher activity toward C20:4(n-6) acyl-CoA. May participate in the production of polyunsaturated VLCFAs of different chain lengths that are involved in multiple biological processes as precursors of membrane lipids and lipid mediators. Essential for the formation of C24:5(n-6) up to C30:5(n-6) PUFAs in testis, these fatty acids being indispensable for normal spermatogenesis and fertility. In Mus musculus (Mouse), this protein is Very long chain fatty acid elongase 2.